A 607-amino-acid chain; its full sequence is V-type proton ATPase catalytic subunit A (607 aa).

246-253 (GAFGCGKT) serves as a coordination point for ATP.

This sequence belongs to the ATPase alpha/beta chains family. As to quaternary structure, V-ATPase is a heteromultimeric enzyme composed of a peripheral catalytic V1 complex (components A to H) attached to an integral membrane V0 proton pore complex (components: a, c, c', c'', d, e, f and VOA1).

The protein resides in the vacuole membrane. It catalyses the reaction ATP + H2O + 4 H(+)(in) = ADP + phosphate + 5 H(+)(out). Functionally, catalytic subunit of the V1 complex of vacuolar(H+)-ATPase (V-ATPase), a multisubunit enzyme composed of a peripheral complex (V1) that hydrolyzes ATP and a membrane integral complex (V0) that translocates protons. V-ATPase is responsible for acidifying and maintaining the pH of intracellular compartments. The sequence is that of V-type proton ATPase catalytic subunit A (vma-1) from Neurospora crassa (strain ATCC 24698 / 74-OR23-1A / CBS 708.71 / DSM 1257 / FGSC 987).